Reading from the N-terminus, the 37-residue chain is MTAESMLFNGAILSIVLVLVGLAWGFLLLKIQGGEAE.

A helical membrane pass occupies residues 11–29 (AILSIVLVLVGLAWGFLLL).

The protein belongs to the PetM family. As to quaternary structure, the 4 large subunits of the cytochrome b6-f complex are cytochrome b6, subunit IV (17 kDa polypeptide, PetD), cytochrome f and the Rieske protein, while the 4 small subunits are PetG, PetL, PetM and PetN. The complex functions as a dimer.

It localises to the cellular thylakoid membrane. In terms of biological role, component of the cytochrome b6-f complex, which mediates electron transfer between photosystem II (PSII) and photosystem I (PSI), cyclic electron flow around PSI, and state transitions. This is Cytochrome b6-f complex subunit 7 from Gloeothece citriformis (strain PCC 7424) (Cyanothece sp. (strain PCC 7424)).